We begin with the raw amino-acid sequence, 1304 residues long: DNA-directed RNA polymerase subunit beta' (1304 aa).

Residues Cys-60, Cys-62, Cys-75, and Cys-78 each coordinate Zn(2+). Positions 541, 543, and 545 each coordinate Mg(2+). Zn(2+) contacts are provided by Cys-887, Cys-963, Cys-970, and Cys-973.

It belongs to the RNA polymerase beta' chain family. In terms of assembly, the RNAP catalytic core consists of 2 alpha, 1 beta, 1 beta' and 1 omega subunit. When a sigma factor is associated with the core the holoenzyme is formed, which can initiate transcription. The cofactor is Mg(2+). Zn(2+) serves as cofactor.

The enzyme catalyses RNA(n) + a ribonucleoside 5'-triphosphate = RNA(n+1) + diphosphate. Its function is as follows. DNA-dependent RNA polymerase catalyzes the transcription of DNA into RNA using the four ribonucleoside triphosphates as substrates. The polypeptide is DNA-directed RNA polymerase subunit beta' (Acidothermus cellulolyticus (strain ATCC 43068 / DSM 8971 / 11B)).